The primary structure comprises 166 residues: Endoribonuclease YbeY (166 aa).

Residues His111, His115, and His121 each contribute to the Zn(2+) site. The disordered stretch occupies residues 141–166; that stretch reads LGYPDPYADDESADHPHSDTPSKDHE. Over residues 153-166 the composition is skewed to basic and acidic residues; it reads ADHPHSDTPSKDHE.

The protein belongs to the endoribonuclease YbeY family. It depends on Zn(2+) as a cofactor.

It localises to the cytoplasm. Its function is as follows. Single strand-specific metallo-endoribonuclease involved in late-stage 70S ribosome quality control and in maturation of the 3' terminus of the 16S rRNA. This is Endoribonuclease YbeY from Pseudomonas syringae pv. tomato (strain ATCC BAA-871 / DC3000).